The following is a 241-amino-acid chain: Leucyl/phenylalanyl-tRNA--protein transferase (241 aa).

The protein belongs to the L/F-transferase family.

The protein localises to the cytoplasm. It carries out the reaction N-terminal L-lysyl-[protein] + L-leucyl-tRNA(Leu) = N-terminal L-leucyl-L-lysyl-[protein] + tRNA(Leu) + H(+). It catalyses the reaction N-terminal L-arginyl-[protein] + L-leucyl-tRNA(Leu) = N-terminal L-leucyl-L-arginyl-[protein] + tRNA(Leu) + H(+). The catalysed reaction is L-phenylalanyl-tRNA(Phe) + an N-terminal L-alpha-aminoacyl-[protein] = an N-terminal L-phenylalanyl-L-alpha-aminoacyl-[protein] + tRNA(Phe). Functions in the N-end rule pathway of protein degradation where it conjugates Leu, Phe and, less efficiently, Met from aminoacyl-tRNAs to the N-termini of proteins containing an N-terminal arginine or lysine. In Neisseria meningitidis serogroup B (strain ATCC BAA-335 / MC58), this protein is Leucyl/phenylalanyl-tRNA--protein transferase.